The chain runs to 70 residues: Small ribosomal subunit protein bS21 (70 aa).

The segment at 39-70 (EKPTTERKRKKAAAVSRTRKRLRSQMLPKKLY) is disordered. The span at 45-61 (RKRKKAAAVSRTRKRLR) shows a compositional bias: basic residues.

It belongs to the bacterial ribosomal protein bS21 family.

The polypeptide is Small ribosomal subunit protein bS21 (Ralstonia nicotianae (strain ATCC BAA-1114 / GMI1000) (Ralstonia solanacearum)).